A 311-amino-acid polypeptide reads, in one-letter code: Ribosomal RNA small subunit methyltransferase H (311 aa).

Residues 33–35 (AGH), aspartate 53, phenylalanine 80, aspartate 101, and glutamine 108 each bind S-adenosyl-L-methionine.

The protein belongs to the methyltransferase superfamily. RsmH family.

The protein localises to the cytoplasm. The enzyme catalyses cytidine(1402) in 16S rRNA + S-adenosyl-L-methionine = N(4)-methylcytidine(1402) in 16S rRNA + S-adenosyl-L-homocysteine + H(+). Its function is as follows. Specifically methylates the N4 position of cytidine in position 1402 (C1402) of 16S rRNA. This Geobacter sulfurreducens (strain ATCC 51573 / DSM 12127 / PCA) protein is Ribosomal RNA small subunit methyltransferase H.